A 310-amino-acid polypeptide reads, in one-letter code: N-acetyl-gamma-glutamyl-phosphate reductase (310 aa).

The active site involves C117.

It belongs to the NAGSA dehydrogenase family. Type 2 subfamily.

It is found in the cytoplasm. It catalyses the reaction N-acetyl-L-glutamate 5-semialdehyde + phosphate + NADP(+) = N-acetyl-L-glutamyl 5-phosphate + NADPH + H(+). The protein operates within amino-acid biosynthesis; L-arginine biosynthesis; N(2)-acetyl-L-ornithine from L-glutamate: step 3/4. Catalyzes the NADPH-dependent reduction of N-acetyl-5-glutamyl phosphate to yield N-acetyl-L-glutamate 5-semialdehyde. The chain is N-acetyl-gamma-glutamyl-phosphate reductase from Rhizobium rhizogenes (strain K84 / ATCC BAA-868) (Agrobacterium radiobacter).